The primary structure comprises 218 residues: Outer-membrane lipoprotein LolB (218 aa).

A signal peptide spans 1–20; that stretch reads MSQVIRTLALTGLALAGLSG. A lipid anchor (N-palmitoyl cysteine) is attached at C21. A lipid anchor (S-diacylglycerol cysteine) is attached at C21.

It belongs to the LolB family. In terms of assembly, monomer.

It is found in the cell outer membrane. In terms of biological role, plays a critical role in the incorporation of lipoproteins in the outer membrane after they are released by the LolA protein. This Xanthomonas campestris pv. campestris (strain 8004) protein is Outer-membrane lipoprotein LolB.